A 382-amino-acid polypeptide reads, in one-letter code: Proton extrusion protein PxcA (382 aa).

Transmembrane regions (helical) follow at residues 162 to 182 (ILLL…TYIV), 257 to 277 (AIKN…VCLV), 305 to 325 (IILF…TVLL), and 340 to 360 (FILL…KYWI).

This sequence belongs to the CemA family.

It is found in the cell inner membrane. In terms of biological role, required for H(+) efflux immediately after light irradiation to form a rapid H(+) concentration gradient across the thylakoid membranes. Together with PxcL, contributes to transient H(+) uptake following dark to light transition. The sequence is that of Proton extrusion protein PxcA from Parasynechococcus marenigrum (strain WH8102).